The primary structure comprises 944 residues: Putative ATP-dependent RNA helicase (944 aa).

The 170-residue stretch at 66-235 folds into the Helicase ATP-binding domain; the sequence is TTPRSPIDGI…VPLHNLLMKL (170 aa). 79–86 lines the ATP pocket; the sequence is HGVGTGKT. A DEAH box motif is present at residues 183–186; the sequence is DEAH. One can recognise a Helicase C-terminal domain in the interval 451 to 523; the sequence is CLTREVMTVP…QIIGRGIRYQ (73 aa).

Belongs to the DEAD box helicase family. DEAH subfamily.

It catalyses the reaction ATP + H2O = ADP + phosphate + H(+). This is Putative ATP-dependent RNA helicase from Heliothis virescens ascovirus 3e (HvAV-3e).